The primary structure comprises 2207 residues: Kinetochore-associated protein 1 (2207 aa).

The residue at position 13 (Thr13) is a Phosphothreonine. Ser15 carries the post-translational modification Phosphoserine. Positions 1024–1045 (EAAQAEHKHRGPPGPTPARGTH) are disordered.

Interacts with ZW10. This interaction is required for stable association with the kinetochore. Component of the RZZ complex composed of KNTC1/ROD, ZW10 and ZWILCH.

It localises to the cytoplasm. The protein resides in the nucleus. It is found in the chromosome. The protein localises to the centromere. Its subcellular location is the kinetochore. It localises to the cytoskeleton. The protein resides in the spindle. Its function is as follows. Essential component of the mitotic checkpoint, which prevents cells from prematurely exiting mitosis. Required for the assembly of the dynein-dynactin and MAD1-MAD2 complexes onto kinetochores. Its function related to the spindle assembly machinery is proposed to depend on its association in the mitotic RZZ complex. In Mus musculus (Mouse), this protein is Kinetochore-associated protein 1 (Kntc1).